Here is a 226-residue protein sequence, read N- to C-terminus: Peroxiredoxin-like 2C (226 aa).

It belongs to the peroxiredoxin-like PRXL2 family. PRXL2C subfamily. As to expression, expressed in gastric tissues.

May positively regulate ERK1/2 signaling and AKT1 activation leading to HIF1A up-regulation with an increased expression of glycolysis genes and enhanced glycolysis. In Homo sapiens (Human), this protein is Peroxiredoxin-like 2C.